We begin with the raw amino-acid sequence, 310 residues long: Endo-1,4-beta-xylanase B (310 aa).

The signal sequence occupies residues 1-19; sequence MISLSSVAIALTTVVGALA. The region spanning 33 to 223 is the GH11 domain; the sequence is AITSSQTGTN…SSGSASMTVS (191 aa). Glu-119 serves as the catalytic Nucleophile. Catalysis depends on Glu-210, which acts as the Proton donor. Positions 218–227 are enriched in low complexity; that stretch reads ASMTVSAGSS. The disordered stretch occupies residues 218 to 274; sequence ASMTVSAGSSSSGGSGSGSGSGSGSGSGSGSQTTTAGSSTGTGTGSGSGSGSGGSGG. Residues 228–246 are compositionally biased toward gly residues; that stretch reads SSGGSGSGSGSGSGSGSGS. The span at 247–256 shows a compositional bias: low complexity; that stretch reads GSQTTTAGSS. The span at 257–274 shows a compositional bias: gly residues; that stretch reads TGTGTGSGSGSGSGGSGG. Positions 275–310 constitute a CBM1 domain; the sequence is NCAAQWGQCGGQGWNGPTCCSSGTCKASNQWYSQCL.

This sequence belongs to the glycosyl hydrolase 11 (cellulase G) family.

It localises to the secreted. It catalyses the reaction Endohydrolysis of (1-&gt;4)-beta-D-xylosidic linkages in xylans.. It functions in the pathway glycan degradation; xylan degradation. Functionally, endo-1,4-beta-xylanase involved in the hydrolysis of xylan, a major structural heterogeneous polysaccharide found in plant biomass representing the second most abundant polysaccharide in the biosphere, after cellulose. Hydrolyzes birchwood xylan, beechwood xylan, and oat spelt xylan to produce short-chain xylooligosaccharides, xylopentaose, xylotriose, and xylobiose as the main products. The chain is Endo-1,4-beta-xylanase B (xynB) from Penicillium oxalicum.